Consider the following 252-residue polypeptide: MADWNPSLYLQYGAERTRPAAELLARIALDDVSDLLDLGCGPGNSTALLLKRWPLARITGVDNSPAMLEQARVAVPECRFIEADVRQFKPEHAVDLIYANASLQWVPDHYALLPHLISLLKLNGVLAVQMPDNVDEPSHVLMREVAYEQGYPNRAREPLPGIHAYYDILTETGCDVDIWRTTYYHKMSSHQAIIDWVSATGLRPWMQELSEHEQLKFLERYHELLVQQYPIQENGQILLAFPRLFFVARREP.

Belongs to the methyltransferase superfamily. Tam family.

The protein localises to the cytoplasm. It carries out the reaction trans-aconitate + S-adenosyl-L-methionine = (E)-3-(methoxycarbonyl)pent-2-enedioate + S-adenosyl-L-homocysteine. In terms of biological role, catalyzes the S-adenosylmethionine monomethyl esterification of trans-aconitate. This chain is Trans-aconitate 2-methyltransferase, found in Enterobacter sp. (strain 638).